A 127-amino-acid polypeptide reads, in one-letter code: Glycine cleavage system H protein (127 aa).

In terms of domain architecture, Lipoyl-binding spans 22-104 (EVVIGITHFA…YEGAWMVKVE (83 aa)). Lys-63 carries the N6-lipoyllysine modification.

It belongs to the GcvH family. The glycine cleavage system is composed of four proteins: P, T, L and H. (R)-lipoate serves as cofactor.

Its function is as follows. The glycine cleavage system catalyzes the degradation of glycine. The H protein shuttles the methylamine group of glycine from the P protein to the T protein. In terms of biological role, is also involved in protein lipoylation via its role as an octanoyl/lipoyl carrier protein intermediate. The sequence is that of Glycine cleavage system H protein from Bacillus cereus (strain B4264).